A 147-amino-acid chain; its full sequence is Lipoprotein YfjS (147 aa).

The first 20 residues, 1–20, serve as a signal peptide directing secretion; it reads MKRKTLPLLALVATSLFLSA. The N-palmitoyl cysteine moiety is linked to residue Cys21. The S-diacylglycerol cysteine moiety is linked to residue Cys21.

To E.coli YafY.

The protein localises to the cell inner membrane. Functionally, does not induce degP when overexpressed unless it is mutated to resemble YafY. This chain is Lipoprotein YfjS (yfjS), found in Escherichia coli (strain K12).